A 97-amino-acid polypeptide reads, in one-letter code: Large ribosomal subunit protein uL23 (97 aa).

Belongs to the universal ribosomal protein uL23 family. Part of the 50S ribosomal subunit. Contacts protein L29, and trigger factor when it is bound to the ribosome.

In terms of biological role, one of the early assembly proteins it binds 23S rRNA. One of the proteins that surrounds the polypeptide exit tunnel on the outside of the ribosome. Forms the main docking site for trigger factor binding to the ribosome. In Rhizobium etli (strain CIAT 652), this protein is Large ribosomal subunit protein uL23.